The following is a 314-amino-acid chain: GTP cyclohydrolase FolE2 (314 aa).

Positions 290 to 314 (DASAWSAPQASAPDQQESFATGNER) are disordered. Over residues 291-305 (ASAWSAPQASAPDQQ) the composition is skewed to low complexity.

This sequence belongs to the GTP cyclohydrolase IV family.

The enzyme catalyses GTP + H2O = 7,8-dihydroneopterin 3'-triphosphate + formate + H(+). It functions in the pathway cofactor biosynthesis; 7,8-dihydroneopterin triphosphate biosynthesis; 7,8-dihydroneopterin triphosphate from GTP: step 1/1. Converts GTP to 7,8-dihydroneopterin triphosphate. The polypeptide is GTP cyclohydrolase FolE2 (Pseudomonas putida (strain ATCC 700007 / DSM 6899 / JCM 31910 / BCRC 17059 / LMG 24140 / F1)).